A 90-amino-acid polypeptide reads, in one-letter code: Acylphosphatase (90 aa).

Residues T4 to R90 form the Acylphosphatase-like domain. Active-site residues include R19 and N37.

The protein belongs to the acylphosphatase family.

The catalysed reaction is an acyl phosphate + H2O = a carboxylate + phosphate + H(+). This chain is Acylphosphatase (acyP), found in Thermoplasma volcanium (strain ATCC 51530 / DSM 4299 / JCM 9571 / NBRC 15438 / GSS1).